Reading from the N-terminus, the 153-residue chain is Small ribosomal subunit protein uS13 (153 aa).

The protein belongs to the universal ribosomal protein uS13 family. In terms of assembly, part of the 30S ribosomal subunit. Forms a loose heterodimer with protein S19. Forms two bridges to the 50S subunit in the 70S ribosome.

In terms of biological role, located at the top of the head of the 30S subunit, it contacts several helices of the 16S rRNA. In the 70S ribosome it contacts the 23S rRNA (bridge B1a) and protein L5 of the 50S subunit (bridge B1b), connecting the 2 subunits; these bridges are implicated in subunit movement. In Pyrobaculum calidifontis (strain DSM 21063 / JCM 11548 / VA1), this protein is Small ribosomal subunit protein uS13.